Reading from the N-terminus, the 206-residue chain is GTP-binding protein YPT1 (206 aa).

An N-acetylmethionine modification is found at methionine 1. Residues 17–23, 33–40, glycine 66, and 121–124 contribute to the GTP site; these read SGVGKSC, YTNDYIST, and NKCD. Residue cysteine 23 is the site of S-palmitoyl cysteine attachment. The Effector region signature appears at 37-45; the sequence is YISTIGVDF. The tract at residues 63–80 is interaction with GDI1; the sequence is DTAGQERFRTITSSYYRG. Cysteine 123 carries S-palmitoyl cysteine lipidation. Lysine 144 participates in a covalent cross-link: Glycyl lysine isopeptide (Lys-Gly) (interchain with G-Cter in ubiquitin). 152–153 lines the GTP pocket; that stretch reads AL. Phosphoserine is present on residues serine 172 and serine 174. A disordered region spans residues 173-206; sequence MSQQNLNETTQKKEDKGNVNLKGQSLTNTGGGCC. An interaction with GDI1 region spans residues 189–195; the sequence is GNVNLKG. Residues cysteine 205 and cysteine 206 are each lipidated (S-geranylgeranyl cysteine).

It belongs to the small GTPase superfamily. Rab family. As to quaternary structure, forms a complex with the Rab escort protein (REP) MRS6, which is recognized by Rab geranylgeranyltransferase BET2-BET4. Interacts with the Rab GDP dissociation inhibitor GDI1, which can retrieve from and deliver to membranes the GDP-bound and prenylated form of YPT1. Interacts with YIP1, which is required for proper membrane targeting of prenylated YPT1. Interacts with YIF1, YIP3, YIP4 and YIP5. Prenylation is required for interaction with GDI1 and YIP1.

It localises to the endoplasmic reticulum membrane. It is found in the golgi apparatus membrane. The protein localises to the cytoplasm. The protein resides in the preautophagosomal structure membrane. Its activity is regulated as follows. Rab activation is generally mediated by a guanine exchange factor (GEF), while inactivation through hydrolysis of bound GTP is catalyzed by a GTPase activating protein (GAP). YPT1 is activated by the GEFs DSS4 and TRAPP complex, and inactivated by GAPs GYP1, GYP5 and GYP8. Its function is as follows. The small GTPases Rab are key regulators of intracellular membrane trafficking, from the formation of transport vesicles to their fusion with membranes. Rabs cycle between an inactive GDP-bound form and an active GTP-bound form that is able to recruit to membranes different set of downstream effectors directly responsible for vesicle formation, movement, tethering and fusion. YPT1 regulates the trafficking of secretory vesicles from the endoplasmic reticulum (ER) to the Golgi. Vesicular transport depends on shuttling of YPT1 between membrane and cytosol by GDI1, probably by recycling it to its membrane of origin after a vesicle fusion event. Plays a role in the initial events of the autophagic vacuole development which take place at specialized regions of the endoplasmic reticulum. Also involved in the recycling of membrane proteins. The protein is GTP-binding protein YPT1 (YPT1) of Saccharomyces cerevisiae (strain ATCC 204508 / S288c) (Baker's yeast).